We begin with the raw amino-acid sequence, 404 residues long: Cystinosin homolog (404 aa).

At 20 to 123 (TNNLVVRQKE…FARITVIRSH (104 aa)) the chain is on the lumenal side. N46, N53, N79, and N97 each carry an N-linked (GlcNAc...) asparagine glycan. The chain crosses the membrane as a helical span at residues 124–144 (FLAILIQIVGWTYFFAWSISF). Residues 125-191 (LAILIQIVGW…MYYNSHVKNE (67 aa)) form the PQ-loop 1 domain. Topologically, residues 145 to 163 (YPQMYLNFKRKSVVGLNFD) are cytoplasmic. Residues 164–184 (FLSLNLVGFCAYAIFNLLMYY) traverse the membrane as a helical segment. Residues 185 to 207 (NSHVKNEYNIVNPRSPPPVLLND) are Lumenal-facing. The chain crosses the membrane as a helical span at residues 208-228 (VVFAVHAFLACFITILQCLFY). Residues 229 to 238 (ERDNQSVSSK) lie on the Cytoplasmic side of the membrane. A helical membrane pass occupies residues 239-259 (CIALMIVLISFGFCSAAATVL). At 260–263 (RKIQ) the chain is on the lumenal side. Residues 264–285 (LLSFVTSLSYIKMAVTCCKYFP) form a helical membrane-spanning segment. The PQ-loop 2 domain maps to 266 to 327 (SFVTSLSYIK…MILQAVNVND (62 aa)). Residues 286–295 (QAYFNYTRKS) are Cytoplasmic-facing. A helical membrane pass occupies residues 296 to 316 (TVGWSIGNIMLDFTGGTLDIL). Over 317–337 (QMILQAVNVNDWSAFYANPVK) the chain is Lumenal. A helical membrane pass occupies residues 338–358 (FGLGFVSIFFDIIFMVQHYVL). Residues 359-404 (YPNAEVPHNEYHGVDNPNPDNIARDAEQYAGDSESMESTEPIIVHD) are Cytoplasmic-facing.

Belongs to the cystinosin family.

The protein resides in the lysosome membrane. The protein localises to the cytoplasmic vesicle. Its subcellular location is the phagosome. The enzyme catalyses L-cystine(out) + H(+)(out) = L-cystine(in) + H(+)(in). Functionally, cystine/H(+) symporter that mediates export of cystine, the oxidized dimer of cysteine, from lysosomes. May play a role in the degradation of engulfed apoptotic cells. The chain is Cystinosin homolog (ctns-1) from Caenorhabditis elegans.